The primary structure comprises 441 residues: Glutamate-1-semialdehyde 2,1-aminomutase (441 aa).

Lys-270 carries the post-translational modification N6-(pyridoxal phosphate)lysine.

Belongs to the class-III pyridoxal-phosphate-dependent aminotransferase family. HemL subfamily. In terms of assembly, homodimer. Pyridoxal 5'-phosphate serves as cofactor.

It is found in the cytoplasm. The catalysed reaction is (S)-4-amino-5-oxopentanoate = 5-aminolevulinate. It functions in the pathway porphyrin-containing compound metabolism; protoporphyrin-IX biosynthesis; 5-aminolevulinate from L-glutamyl-tRNA(Glu): step 2/2. The protein is Glutamate-1-semialdehyde 2,1-aminomutase (hemL) of Propionibacterium freudenreichii subsp. freudenreichii.